Reading from the N-terminus, the 101-residue chain is Pterin-4-alpha-carbinolamine dehydratase (101 aa).

It belongs to the pterin-4-alpha-carbinolamine dehydratase family.

The enzyme catalyses (4aS,6R)-4a-hydroxy-L-erythro-5,6,7,8-tetrahydrobiopterin = (6R)-L-erythro-6,7-dihydrobiopterin + H2O. The sequence is that of Pterin-4-alpha-carbinolamine dehydratase (Pcd) from Drosophila virilis (Fruit fly).